A 151-amino-acid polypeptide reads, in one-letter code: MAFEKLGEKFSNFFAMDNEDDYQDQEDEQAQQPAPEQPVDNHYRSNKVVSMATPAGKTAKIVVYEPRVYSDAKEIGSHLLNNRAVVINFDRIGSDDATRIVDFLTGTVFAINGEIKRVGESIFLVTPANFEIDGSLASTIDSDGLNLSSQH.

Acidic residues predominate over residues Asp-17 to Gln-29. The tract at residues Asp-17–His-42 is disordered.

It belongs to the SepF family. Homodimer. Interacts with FtsZ.

The protein resides in the cytoplasm. Functionally, cell division protein that is part of the divisome complex and is recruited early to the Z-ring. Probably stimulates Z-ring formation, perhaps through the cross-linking of FtsZ protofilaments. Its function overlaps with FtsA. This is Cell division protein SepF from Lacticaseibacillus casei (strain BL23) (Lactobacillus casei).